The primary structure comprises 234 residues: Lactate utilization protein C 1 (234 aa).

Belongs to the LutC/YkgG family.

Functionally, is involved in L-lactate degradation and allows cells to grow with lactate as the sole carbon source. This is Lactate utilization protein C 1 from Bacillus mycoides (strain KBAB4) (Bacillus weihenstephanensis).